A 292-amino-acid chain; its full sequence is Protein/nucleic acid deglycase HchA (292 aa).

Positions 1–12 are enriched in polar residues; that stretch reads MSQDVNKLSKQP. Residues 1–23 are disordered; that stretch reads MSQDVNKLSKQPTPDKAEDNAFF. The active-site Nucleophile is the cysteine 190.

Belongs to the peptidase C56 family. HchA subfamily.

Its subcellular location is the cytoplasm. The enzyme catalyses N(omega)-(1-hydroxy-2-oxopropyl)-L-arginyl-[protein] + H2O = lactate + L-arginyl-[protein] + H(+). It catalyses the reaction N(6)-(1-hydroxy-2-oxopropyl)-L-lysyl-[protein] + H2O = lactate + L-lysyl-[protein] + H(+). It carries out the reaction S-(1-hydroxy-2-oxopropyl)-L-cysteinyl-[protein] + H2O = lactate + L-cysteinyl-[protein] + H(+). The catalysed reaction is N(omega)-(1-hydroxy-2-oxoethyl)-L-arginyl-[protein] + H2O = L-arginyl-[protein] + glycolate + H(+). The enzyme catalyses N(6)-(1-hydroxy-2-oxoethyl)-L-lysyl-[protein] + H2O = glycolate + L-lysyl-[protein] + H(+). It catalyses the reaction S-(1-hydroxy-2-oxoethyl)-L-cysteinyl-[protein] + H2O = glycolate + L-cysteinyl-[protein] + H(+). It carries out the reaction N(2)-(1-hydroxy-2-oxopropyl)-dGTP + H2O = lactate + dGTP + H(+). The catalysed reaction is N(2)-(1-hydroxy-2-oxopropyl)-GTP + H2O = lactate + GTP + H(+). The enzyme catalyses N(2)-(1-hydroxy-2-oxopropyl)-GDP + H2O = lactate + GDP + H(+). It catalyses the reaction N(2)-(1-hydroxy-2-oxopropyl)-GMP + H2O = lactate + GMP + H(+). It carries out the reaction N(2)-(1-hydroxy-2-oxoethyl)-dGTP + H2O = dGTP + glycolate + H(+). The catalysed reaction is N(2)-(1-hydroxy-2-oxoethyl)-GTP + H2O = glycolate + GTP + H(+). The enzyme catalyses N(2)-(1-hydroxy-2-oxoethyl)-GDP + H2O = glycolate + GDP + H(+). It catalyses the reaction N(2)-(1-hydroxy-2-oxoethyl)-GMP + H2O = glycolate + GMP + H(+). It carries out the reaction an N(2)-(1-hydroxy-2-oxopropyl)-guanosine in RNA + H2O = a guanosine in RNA + lactate + H(+). The catalysed reaction is an N(2)-(1-hydroxy-2-oxopropyl)-2'-deoxyguanosine in DNA + H2O = a 2'-deoxyguanosine in DNA + lactate + H(+). The enzyme catalyses an N(2)-(1-hydroxy-2-oxoethyl)-guanosine in RNA + H2O = a guanosine in RNA + glycolate + H(+). It catalyses the reaction an N(2)-(1-hydroxy-2-oxoethyl)-2'-deoxyguanosine in DNA + H2O = a 2'-deoxyguanosine in DNA + glycolate + H(+). Protein and nucleotide deglycase that catalyzes the deglycation of the Maillard adducts formed between amino groups of proteins or nucleotides and reactive carbonyl groups of glyoxals. Thus, functions as a protein deglycase that repairs methylglyoxal- and glyoxal-glycated proteins, and releases repaired proteins and lactate or glycolate, respectively. Deglycates cysteine, arginine and lysine residues in proteins, and thus reactivates these proteins by reversing glycation by glyoxals. Acts on early glycation intermediates (hemithioacetals and aminocarbinols), preventing the formation of Schiff bases and advanced glycation endproducts (AGE). Also functions as a nucleotide deglycase able to repair glycated guanine in the free nucleotide pool (GTP, GDP, GMP, dGTP) and in DNA and RNA. Is thus involved in a major nucleotide repair system named guanine glycation repair (GG repair), dedicated to reversing methylglyoxal and glyoxal damage via nucleotide sanitization and direct nucleic acid repair. Plays an important role in protecting cells from carbonyl stress. The protein is Protein/nucleic acid deglycase HchA of Staphylococcus aureus (strain MRSA252).